Reading from the N-terminus, the 804-residue chain is Leucine--tRNA ligase (804 aa).

The 'HIGH' region signature appears at 40–51 (PYPSGAGLHVGH). Positions 576–580 (KMSKS) match the 'KMSKS' region motif. Lys-579 is an ATP binding site.

The protein belongs to the class-I aminoacyl-tRNA synthetase family.

It localises to the cytoplasm. It carries out the reaction tRNA(Leu) + L-leucine + ATP = L-leucyl-tRNA(Leu) + AMP + diphosphate. This is Leucine--tRNA ligase from Bacillus velezensis (strain DSM 23117 / BGSC 10A6 / LMG 26770 / FZB42) (Bacillus amyloliquefaciens subsp. plantarum).